A 134-amino-acid chain; its full sequence is ATP synthase epsilon chain (134 aa).

Belongs to the ATPase epsilon chain family. As to quaternary structure, F-type ATPases have 2 components, CF(1) - the catalytic core - and CF(0) - the membrane proton channel. CF(1) has five subunits: alpha(3), beta(3), gamma(1), delta(1), epsilon(1). CF(0) has three main subunits: a, b and c.

It is found in the cell inner membrane. Produces ATP from ADP in the presence of a proton gradient across the membrane. This chain is ATP synthase epsilon chain, found in Rhizobium meliloti (strain 1021) (Ensifer meliloti).